The sequence spans 342 residues: Ribosomal RNA small subunit methyltransferase C (342 aa).

The protein belongs to the methyltransferase superfamily. RsmC family. In terms of assembly, monomer.

The protein resides in the cytoplasm. The enzyme catalyses guanosine(1207) in 16S rRNA + S-adenosyl-L-methionine = N(2)-methylguanosine(1207) in 16S rRNA + S-adenosyl-L-homocysteine + H(+). Specifically methylates the guanine in position 1207 of 16S rRNA in the 30S particle. The chain is Ribosomal RNA small subunit methyltransferase C from Salmonella newport (strain SL254).